The sequence spans 1037 residues: Multidrug resistance protein MdtF (1037 aa).

Residues 1-9 are Cytoplasmic-facing; that stretch reads MANYFIDRP. A helical transmembrane segment spans residues 10–28; the sequence is VFAWVLAIIMMLAGGLAIM. The Periplasmic portion of the chain corresponds to 29-339; that stretch reads NLPVAQYPQI…TPFIEISIQE (311 aa). Residues 340–359 traverse the membrane as a helical segment; it reads VFKTLVEAIILVFLVMYLFL. Residues 360–365 are Cytoplasmic-facing; it reads QNFRAT. A helical transmembrane segment spans residues 366–385; sequence IIPTIAVPVVILGTFAILSA. The Periplasmic segment spans residues 386–391; it reads VGFTIN. The helical transmembrane segment at 392-413 threads the bilayer; sequence TLTMFGMVLAIGLLVDDAIVVV. Residues 414–441 are Cytoplasmic-facing; sequence ENVERVIAEDKLPPKEATHKSMGQIQRA. Residues 442-460 form a helical membrane-spanning segment; the sequence is LVGIAVVLSAVFMPMAFMS. Over 461–473 the chain is Periplasmic; that stretch reads GATGEIYRQFSIT. A helical membrane pass occupies residues 474–496; the sequence is LISSMLLSVFVAMSLTPALCATI. The Cytoplasmic segment spans residues 497–536; sequence LKAAPEGGHKPNALFARFNTLFEKSTQHYTDSTRSLLRCT. A helical transmembrane segment spans residues 537 to 555; sequence GRYMVVYLLICAGMAVLFL. The Periplasmic portion of the chain corresponds to 556–870; the sequence is RTPTSFLPEE…SYQEALSSNQ (315 aa). The chain crosses the membrane as a helical span at residues 871 to 890; sequence APALYAISLVVVFLALAALY. Residues 891–896 are Cytoplasmic-facing; it reads ESWSIP. A helical transmembrane segment spans residues 897–916; sequence FSVMLVVPLGVVGALLATDL. Residues 917-922 lie on the Periplasmic side of the membrane; sequence RGLSND. A helical transmembrane segment spans residues 923-944; that stretch reads VYFQVGLLTTIGLSAKNAILIV. Topologically, residues 945 to 972 are cytoplasmic; the sequence is EFAVEMMQKEGKTPIEAIIEAARMRLRP. The chain crosses the membrane as a helical span at residues 973-991; sequence ILMTSLAFILGVLPLVISH. Over 992 to 1004 the chain is Periplasmic; it reads GAGSGAQNAVGTG. Residues 1005-1027 traverse the membrane as a helical segment; it reads VMGGMFAATVLAIYFVPVFFVVV. At 1028 to 1037 the chain is on the cytoplasmic side; sequence EHLFARFKKA.

Belongs to the resistance-nodulation-cell division (RND) (TC 2.A.6) family. Homotrimer. Part of the tripartite efflux system MdtEF-TolC, which is composed of an inner membrane transporter, MdtF, a membrane fusion protein, MdtE, and an outer membrane component, TolC. The complex forms a large protein conduit and can translocate molecules across both the inner and outer membranes.

The protein localises to the cell inner membrane. Part of the tripartite efflux system MdtEF-TolC, which confers resistance to compounds such as rhodamine 6G, erythromycin, doxorubicin, ethidium bromide, TPP, SDS, deoxycholate, crystal violet and benzalkonium. This chain is Multidrug resistance protein MdtF (mdtF), found in Escherichia coli (strain K12).